The chain runs to 433 residues: Probable imidazolonepropionase (433 aa).

2 residues coordinate 4-imidazolone-5-propanoate: tyrosine 160 and histidine 193. Residue tyrosine 160 participates in N-formimidoyl-L-glutamate binding. Fe(3+) is bound at residue histidine 261. Histidine 261 is a Zn(2+) binding site. Glutamate 264 contacts 4-imidazolone-5-propanoate. Aspartate 335 serves as a coordination point for Fe(3+). Residue aspartate 335 coordinates Zn(2+). An N-formimidoyl-L-glutamate-binding site is contributed by asparagine 337.

The protein belongs to the metallo-dependent hydrolases superfamily. HutI family. Zn(2+) is required as a cofactor. Fe(3+) serves as cofactor.

The enzyme catalyses 4-imidazolone-5-propanoate + H2O = N-formimidoyl-L-glutamate. It participates in amino-acid degradation; L-histidine degradation into L-glutamate; N-formimidoyl-L-glutamate from L-histidine: step 3/3. This chain is Probable imidazolonepropionase (amdhd1), found in Danio rerio (Zebrafish).